Reading from the N-terminus, the 555-residue chain is Alpha-1,2-mannosyltransferase ALG9 (555 aa).

The Cytoplasmic segment spans residues 1-7 (MNCKAVT). The helical transmembrane segment at 8–28 (ISLLLLLFLTRVYIQPTFSLI) threads the bilayer. Residues 29–62 (SDCDETFNYWEPLNLLVRGFGKQTWEYSPEYSIR) lie on the Lumenal side of the membrane. A helical transmembrane segment spans residues 63–83 (SWAFLLPFYCILYPVNKFTDL). Topologically, residues 84–86 (ESH) are cytoplasmic. Residues 87–107 (WNFFITRACLGFFSFIMEFKL) traverse the membrane as a helical segment. The Lumenal portion of the chain corresponds to 108–113 (HREIAG). Residues 114-134 (SLALQIANIWIIFQLFNPGWF) form a helical membrane-spanning segment. At 135–176 (HASVELLPSAVAMLLYVGATRHSLRYLSTGSTSNFTKSLAYN) the chain is on the cytoplasmic side. The helical transmembrane segment at 177–197 (FLASILGWPFVLILSLPLCLH) threads the bilayer. Residues 198–213 (YLFNHRIISTIRTAFD) are Lumenal-facing. A helical membrane pass occupies residues 214–234 (CCLIFSLTAFAVIVTDSIFYG). Over 235-268 (KLAPVSWNILFYNVINASEESGPNIFGVEPWYYY) the chain is Cytoplasmic. A helical membrane pass occupies residues 269-289 (PLNLLLNFPLPVLVLAILGIF). The Lumenal segment spans residues 290–316 (HLRLWPLWASLFTWIAVFTQQPHKEER). The helical transmembrane segment at 317 to 337 (FLYPIYGLITLSASIAFYKVL) threads the bilayer. Residues 338–349 (NLFNRKPILKKG) lie on the Cytoplasmic side of the membrane. Residues 350–370 (IKLSVLLIVAGQAMSRIVALV) form a helical membrane-spanning segment. Residues 371 to 555 (NNYTAPIAVY…LFEKPTETTN (185 aa)) are Lumenal-facing.

This sequence belongs to the glycosyltransferase 22 family.

The protein resides in the endoplasmic reticulum membrane. It carries out the reaction an alpha-D-Man-(1-&gt;2)-alpha-D-Man-(1-&gt;2)-alpha-D-Man-(1-&gt;3)-[alpha-D-Man-(1-&gt;3)-alpha-D-Man-(1-&gt;6)]-beta-D-Man-(1-&gt;4)-beta-D-GlcNAc-(1-&gt;4)-alpha-D-GlcNAc-diphospho-di-trans,poly-cis-dolichol + a di-trans,poly-cis-dolichyl beta-D-mannosyl phosphate = an alpha-D-Man-(1-&gt;2)-alpha-D-Man-(1-&gt;2)-alpha-D-Man-(1-&gt;3)-[alpha-D-Man-(1-&gt;2)-alpha-D-Man-(1-&gt;3)-alpha-D-Man-(1-&gt;6)]-beta-D-Man-(1-&gt;4)-beta-D-GlcNAc-(1-&gt;4)-alpha-D-GlcNAc-diphospho-di-trans,poly-cis-dolichol + a di-trans,poly-cis-dolichyl phosphate + H(+). It catalyses the reaction an alpha-D-Man-(1-&gt;2)-alpha-D-Man-(1-&gt;2)-alpha-D-Man-(1-&gt;3)-[alpha-D-Man-(1-&gt;2)-alpha-D-Man-(1-&gt;3)-[alpha-D-Man-(1-&gt;6)]-alpha-D-Man-(1-&gt;6)]-beta-D-Man-(1-&gt;4)-beta-D-GlcNAc-(1-&gt;4)-alpha-D-GlcNAc-diphospho-di-trans,poly-cis-dolichol + a di-trans,poly-cis-dolichyl beta-D-mannosyl phosphate = an alpha-D-Man-(1-&gt;2)-alpha-D-Man-(1-&gt;2)-alpha-D-Man-(1-&gt;3)-[alpha-D-Man-(1-&gt;2)-alpha-D-Man-(1-&gt;3)-[alpha-D-Man-(1-&gt;2)-alpha-D-Man-(1-&gt;6)]-alpha-D-Man-(1-&gt;6)]-beta-D-Man-(1-&gt;4)-beta-D-GlcNAc-(1-&gt;4)-alpha-D-GlcNAc-diphospho-di-trans,poly-cis-dolichol + a di-trans,poly-cis-dolichyl phosphate + H(+). It participates in protein modification; protein glycosylation. Its function is as follows. Mannosyltransferase that operates in the biosynthetic pathway of dolichol-linked oligosaccharides, the glycan precursors employed in protein asparagine (N)-glycosylation. The assembly of dolichol-linked oligosaccharides begins on the cytosolic side of the endoplasmic reticulum membrane and finishes in its lumen. The sequential addition of sugars to dolichol pyrophosphate produces dolichol-linked oligosaccharides containing fourteen sugars, including two GlcNAcs, nine mannoses and three glucoses. Once assembled, the oligosaccharide is transferred from the lipid to nascent proteins by oligosaccharyltransferases. In the lumen of the endoplasmic reticulum, catalyzes the addition of the seventh and ninth alpha-1,2-linked mannose residues to Man(6)GlcNAc(2)-PP-dolichol and Man(8)GlcNAc(2)-PP-dolichol respectively. The protein is Alpha-1,2-mannosyltransferase ALG9 (ALG9) of Saccharomyces cerevisiae (strain ATCC 204508 / S288c) (Baker's yeast).